The chain runs to 259 residues: uncharacterized protein (259 aa).

The region spanning 19-249 (TKIPGAKYVI…DEVINTIKKK (231 aa)) is the Radical SAM core domain. [4Fe-4S] cluster-binding residues include C34, C38, and C41.

It depends on [4Fe-4S] cluster as a cofactor.

This is an uncharacterized protein from Methanocaldococcus jannaschii (strain ATCC 43067 / DSM 2661 / JAL-1 / JCM 10045 / NBRC 100440) (Methanococcus jannaschii).